The sequence spans 489 residues: Betaine aldehyde dehydrogenase (489 aa).

K(+) is bound by residues T26 and D93. NAD(+) is bound at residue 150 to 152 (GAW). The active-site Charge relay system is the K162. 176–179 (KPSE) is an NAD(+) binding site. V180 serves as a coordination point for K(+). 229–232 (GVET) contributes to the NAD(+) binding site. L245 lines the K(+) pocket. E251 acts as the Proton acceptor in catalysis. NAD(+) contacts are provided by G253, C285, and E386. The active-site Nucleophile is the C285. Residue C285 is modified to Cysteine sulfenic acid (-SOH). K(+) contacts are provided by K456 and G459. The active-site Charge relay system is E463.

This sequence belongs to the aldehyde dehydrogenase family. Dimer of dimers. K(+) serves as cofactor.

The enzyme catalyses betaine aldehyde + NAD(+) + H2O = glycine betaine + NADH + 2 H(+). The protein operates within amine and polyamine biosynthesis; betaine biosynthesis via choline pathway; betaine from betaine aldehyde: step 1/1. Functionally, involved in the biosynthesis of the osmoprotectant glycine betaine. Catalyzes the irreversible oxidation of betaine aldehyde to the corresponding acid. This chain is Betaine aldehyde dehydrogenase, found in Burkholderia vietnamiensis (strain G4 / LMG 22486) (Burkholderia cepacia (strain R1808)).